The sequence spans 259 residues: Deoxyribose-phosphate aldolase (259 aa).

Catalysis depends on Asp104, which acts as the Proton donor/acceptor. Lys168 functions as the Schiff-base intermediate with acetaldehyde in the catalytic mechanism. Lys200 acts as the Proton donor/acceptor in catalysis.

The protein belongs to the DeoC/FbaB aldolase family. DeoC type 2 subfamily.

The protein resides in the cytoplasm. The enzyme catalyses 2-deoxy-D-ribose 5-phosphate = D-glyceraldehyde 3-phosphate + acetaldehyde. The protein operates within carbohydrate degradation; 2-deoxy-D-ribose 1-phosphate degradation; D-glyceraldehyde 3-phosphate and acetaldehyde from 2-deoxy-alpha-D-ribose 1-phosphate: step 2/2. In terms of biological role, catalyzes a reversible aldol reaction between acetaldehyde and D-glyceraldehyde 3-phosphate to generate 2-deoxy-D-ribose 5-phosphate. The chain is Deoxyribose-phosphate aldolase from Agrobacterium fabrum (strain C58 / ATCC 33970) (Agrobacterium tumefaciens (strain C58)).